The following is a 647-amino-acid chain: 1-deoxy-D-xylulose-5-phosphate synthase (647 aa).

Thiamine diphosphate contacts are provided by residues histidine 88 and 129–131; that span reads GHA. Aspartate 160 contributes to the Mg(2+) binding site. Thiamine diphosphate-binding positions include 161–162, asparagine 189, tyrosine 300, and glutamate 377; that span reads GA. Residue asparagine 189 participates in Mg(2+) binding.

It belongs to the transketolase family. DXPS subfamily. Homodimer. It depends on Mg(2+) as a cofactor. Thiamine diphosphate serves as cofactor.

The catalysed reaction is D-glyceraldehyde 3-phosphate + pyruvate + H(+) = 1-deoxy-D-xylulose 5-phosphate + CO2. It participates in metabolic intermediate biosynthesis; 1-deoxy-D-xylulose 5-phosphate biosynthesis; 1-deoxy-D-xylulose 5-phosphate from D-glyceraldehyde 3-phosphate and pyruvate: step 1/1. In terms of biological role, catalyzes the acyloin condensation reaction between C atoms 2 and 3 of pyruvate and glyceraldehyde 3-phosphate to yield 1-deoxy-D-xylulose-5-phosphate (DXP). This chain is 1-deoxy-D-xylulose-5-phosphate synthase, found in Dehalococcoides mccartyi (strain CBDB1).